The chain runs to 309 residues: Taste receptor type 2 member 43 (309 aa).

Residue Met-1 is a topological domain, extracellular. Residues 2-22 (ITFLPIIFSSLVVVTFVIGNF) traverse the membrane as a helical segment. At 23-46 (ANGFIALVNSIEWFKRQKISFADQ) the chain is on the cytoplasmic side. Residues 47–67 (ILTALAVSRVGLLWVLLLNWY) form a helical membrane-spanning segment. Over 68-86 (STVLNPAFNSVEVRTTAYN) the chain is Extracellular. The chain crosses the membrane as a helical span at residues 87-107 (IWAVINHFSNWLATSLSIFYL). Over 108-126 (LKIANFSNFIFLHLKRRVK) the chain is Cytoplasmic. The chain crosses the membrane as a helical span at residues 127–147 (SVILVMLLGPLLFLACHLFVI). Over 148 to 178 (NMNEIVRTKEFEGNMTWKIKLKSAMYFSNMT) the chain is Extracellular. Residues Asn-161 and Asn-176 are each glycosylated (N-linked (GlcNAc...) asparagine). The helical transmembrane segment at 179 to 199 (VTMVANLVPFTLTLLSFLLLI) threads the bilayer. Topologically, residues 200-229 (CSLCKHLKKMQLHGKGSQDPSTKVHIKVLQ) are cytoplasmic. Residues 230-250 (TVISFLLLCAIYFLSIMISVW) form a helical membrane-spanning segment. Topologically, residues 251–259 (SFGSLKNKP) are extracellular. A helical membrane pass occupies residues 260 to 280 (VFMFCKAMRFSYPSIHPFILI). At 281-309 (WGNKKLKQTFLSVFWQMRYWVKGEKTSSP) the chain is on the cytoplasmic side.

This sequence belongs to the G-protein coupled receptor T2R family.

Its subcellular location is the membrane. The protein resides in the cell projection. It is found in the cilium membrane. Its function is as follows. Gustducin-coupled receptor immplicated in the perception of bitter compounds in the oral cavity and the gastrointestinal tract. Signals through PLCB2 and the calcium-regulated cation channel TRPM5. Activated by the sulfonyl amide sweeteners saccharin and acesulfame K. In airway epithelial cells, binding of bitter compounds increases the intracellular calcium ion concentration and stimulates ciliary beat frequency. May act as chemosensory receptors in airway epithelial cells to detect and eliminate potential noxious agents from the airways. This Pan troglodytes (Chimpanzee) protein is Taste receptor type 2 member 43 (TAS2R43).